We begin with the raw amino-acid sequence, 61 residues long: Small ribosomal subunit protein uS14 (61 aa).

Positions 24, 27, 40, and 43 each coordinate Zn(2+).

This sequence belongs to the universal ribosomal protein uS14 family. Zinc-binding uS14 subfamily. As to quaternary structure, part of the 30S ribosomal subunit. Contacts proteins S3 and S10. It depends on Zn(2+) as a cofactor.

Functionally, binds 16S rRNA, required for the assembly of 30S particles and may also be responsible for determining the conformation of the 16S rRNA at the A site. The sequence is that of Small ribosomal subunit protein uS14 from Clostridium botulinum (strain Alaska E43 / Type E3).